A 684-amino-acid chain; its full sequence is Glycine--tRNA ligase beta subunit (684 aa).

This sequence belongs to the class-II aminoacyl-tRNA synthetase family. In terms of assembly, tetramer of two alpha and two beta subunits.

The protein localises to the cytoplasm. The catalysed reaction is tRNA(Gly) + glycine + ATP = glycyl-tRNA(Gly) + AMP + diphosphate. This chain is Glycine--tRNA ligase beta subunit, found in Pseudomonas fluorescens (strain SBW25).